Reading from the N-terminus, the 603-residue chain is Elongation factor 4 (603 aa).

The tr-type G domain maps to 7-189; it reads SRLRNFCIIA…AVVDRIPSPK (183 aa). Residues 19-24 and 136-139 each bind GTP; these read DHGKST and NKVD.

Belongs to the TRAFAC class translation factor GTPase superfamily. Classic translation factor GTPase family. LepA subfamily.

Its subcellular location is the cell inner membrane. The catalysed reaction is GTP + H2O = GDP + phosphate + H(+). Its function is as follows. Required for accurate and efficient protein synthesis under certain stress conditions. May act as a fidelity factor of the translation reaction, by catalyzing a one-codon backward translocation of tRNAs on improperly translocated ribosomes. Back-translocation proceeds from a post-translocation (POST) complex to a pre-translocation (PRE) complex, thus giving elongation factor G a second chance to translocate the tRNAs correctly. Binds to ribosomes in a GTP-dependent manner. This chain is Elongation factor 4, found in Prochlorococcus marinus (strain NATL2A).